The chain runs to 273 residues: 4-hydroxy-tetrahydrodipicolinate reductase (273 aa).

NAD(+) contacts are provided by residues 12–17 (GAGGRM) and E38. R39 is a binding site for NADP(+). NAD(+) is bound by residues 102-104 (GTT) and 126-129 (AANF). H159 serves as the catalytic Proton donor/acceptor. (S)-2,3,4,5-tetrahydrodipicolinate is bound at residue H160. K163 (proton donor) is an active-site residue. 169-170 (GT) is a binding site for (S)-2,3,4,5-tetrahydrodipicolinate.

The protein belongs to the DapB family. In terms of assembly, homotetramer.

Its subcellular location is the cytoplasm. It carries out the reaction (S)-2,3,4,5-tetrahydrodipicolinate + NAD(+) + H2O = (2S,4S)-4-hydroxy-2,3,4,5-tetrahydrodipicolinate + NADH + H(+). It catalyses the reaction (S)-2,3,4,5-tetrahydrodipicolinate + NADP(+) + H2O = (2S,4S)-4-hydroxy-2,3,4,5-tetrahydrodipicolinate + NADPH + H(+). It functions in the pathway amino-acid biosynthesis; L-lysine biosynthesis via DAP pathway; (S)-tetrahydrodipicolinate from L-aspartate: step 4/4. Catalyzes the conversion of 4-hydroxy-tetrahydrodipicolinate (HTPA) to tetrahydrodipicolinate. The chain is 4-hydroxy-tetrahydrodipicolinate reductase from Proteus mirabilis (strain HI4320).